The following is a 524-amino-acid chain: Glutamyl-tRNA(Gln) amidotransferase subunit A (524 aa).

Catalysis depends on charge relay system residues Lys109 and Ser184. Catalysis depends on Ser208, which acts as the Acyl-ester intermediate.

The protein belongs to the amidase family. GatA subfamily. In terms of assembly, heterotrimer of A, B and C subunits.

The catalysed reaction is L-glutamyl-tRNA(Gln) + L-glutamine + ATP + H2O = L-glutaminyl-tRNA(Gln) + L-glutamate + ADP + phosphate + H(+). Its function is as follows. Allows the formation of correctly charged Gln-tRNA(Gln) through the transamidation of misacylated Glu-tRNA(Gln) in organisms which lack glutaminyl-tRNA synthetase. The reaction takes place in the presence of glutamine and ATP through an activated gamma-phospho-Glu-tRNA(Gln). This chain is Glutamyl-tRNA(Gln) amidotransferase subunit A, found in Tropheryma whipplei (strain TW08/27) (Whipple's bacillus).